We begin with the raw amino-acid sequence, 956 residues long: Translation initiation factor IF-2 (956 aa).

The tract at residues 33–370 is disordered; that stretch reads SHASSVEEAD…PVTERKFHEL (338 aa). A compositionally biased stretch (polar residues) spans 46 to 60; the sequence is IASSFSAGVTKNVQA. Residues 63–73 are compositionally biased toward basic and acidic residues; that stretch reads AKDKQVAEQKA. Over residues 76-100 the composition is skewed to low complexity; it reads AKATTPQPAASKAAEKPAAATQEAS. Basic and acidic residues-rich tracts occupy residues 112-125, 134-143, and 179-192; these read FKAEREARAKEQVA, SNDRKSDYRQ, and NDGHRQAGNRDKNR. Low complexity predominate over residues 199–213; sequence RQQDTGRQGQTQAGA. Composition is skewed to basic and acidic residues over residues 234-258 and 266-276; these read ARQRESRFREQEEAKRLEQQARQEA and QTEDKKHREAS. The segment covering 277–293 has biased composition (low complexity); it reads AKATESVASMAAASVAK. Residues 303-320 show a composition bias toward basic and acidic residues; the sequence is NRPDKGHDRDHGLEDGQK. Low complexity predominate over residues 325–343; sequence SWNSQNQVRNQKNSNWNNN. Positions 344–354 are enriched in basic residues; sequence KKNKKGKHHKN. Positions 457–626 constitute a tr-type G domain; the sequence is ERAPVVTIMG…LLVAEVEELK (170 aa). The G1 stretch occupies residues 466-473; it reads GHVDHGKT. Residue 466-473 participates in GTP binding; sequence GHVDHGKT. The G2 stretch occupies residues 491 to 495; it reads GITQH. Residues 512–515 are G3; the sequence is DTPG. GTP-binding positions include 512 to 516 and 566 to 569; these read DTPGH and NKID. Residues 566–569 are G4; it reads NKID. The interval 602-604 is G5; sequence SAK.

The protein belongs to the TRAFAC class translation factor GTPase superfamily. Classic translation factor GTPase family. IF-2 subfamily.

Its subcellular location is the cytoplasm. Its function is as follows. One of the essential components for the initiation of protein synthesis. Protects formylmethionyl-tRNA from spontaneous hydrolysis and promotes its binding to the 30S ribosomal subunits. Also involved in the hydrolysis of GTP during the formation of the 70S ribosomal complex. The chain is Translation initiation factor IF-2 from Streptococcus equi subsp. equi (strain 4047).